A 340-amino-acid polypeptide reads, in one-letter code: Phosphoribosylformylglycinamidine cyclo-ligase (340 aa).

Belongs to the AIR synthase family.

It localises to the cytoplasm. The catalysed reaction is 2-formamido-N(1)-(5-O-phospho-beta-D-ribosyl)acetamidine + ATP = 5-amino-1-(5-phospho-beta-D-ribosyl)imidazole + ADP + phosphate + H(+). Its pathway is purine metabolism; IMP biosynthesis via de novo pathway; 5-amino-1-(5-phospho-D-ribosyl)imidazole from N(2)-formyl-N(1)-(5-phospho-D-ribosyl)glycinamide: step 2/2. The polypeptide is Phosphoribosylformylglycinamidine cyclo-ligase (Crocosphaera subtropica (strain ATCC 51142 / BH68) (Cyanothece sp. (strain ATCC 51142))).